Consider the following 446-residue polypeptide: Phosphoglucosamine mutase (446 aa).

S102 (phosphoserine intermediate) is an active-site residue. Residues S102, D239, D241, and D243 each coordinate Mg(2+). At S102 the chain carries Phosphoserine.

It belongs to the phosphohexose mutase family. The cofactor is Mg(2+). Post-translationally, activated by phosphorylation.

The catalysed reaction is alpha-D-glucosamine 1-phosphate = D-glucosamine 6-phosphate. Functionally, catalyzes the conversion of glucosamine-6-phosphate to glucosamine-1-phosphate. The sequence is that of Phosphoglucosamine mutase from Solibacter usitatus (strain Ellin6076).